The following is a 62-amino-acid chain: Large ribosomal subunit protein uL30 (62 aa).

It belongs to the universal ribosomal protein uL30 family. As to quaternary structure, part of the 50S ribosomal subunit.

In Polynucleobacter asymbioticus (strain DSM 18221 / CIP 109841 / QLW-P1DMWA-1) (Polynucleobacter necessarius subsp. asymbioticus), this protein is Large ribosomal subunit protein uL30.